The chain runs to 433 residues: Putative ankyrin repeat protein R784 (433 aa).

ANK repeat units lie at residues 44 to 70 (NQNL…KTDV), 71 to 101 (NGLK…NNDL), 102 to 131 (LDLH…IVII), 179 to 205 (FYDS…NQCS), 206 to 235 (VRQK…RIFS), 237 to 264 (RRLI…IDLA), 265 to 294 (QNNF…DIHF), 296 to 321 (NGEC…NKVY), 322 to 351 (MSEK…ACMS), and 380 to 409 (NMRK…KLRE).

The chain is Putative ankyrin repeat protein R784 from Acanthamoeba polyphaga mimivirus (APMV).